Here is a 521-residue protein sequence, read N- to C-terminus: Glucose-6-phosphate isomerase (521 aa).

E351 serves as the catalytic Proton donor. Catalysis depends on residues H382 and K491.

This sequence belongs to the GPI family.

The protein resides in the cytoplasm. The catalysed reaction is alpha-D-glucose 6-phosphate = beta-D-fructose 6-phosphate. The protein operates within carbohydrate biosynthesis; gluconeogenesis. It functions in the pathway carbohydrate degradation; glycolysis; D-glyceraldehyde 3-phosphate and glycerone phosphate from D-glucose: step 2/4. Functionally, catalyzes the reversible isomerization of glucose-6-phosphate to fructose-6-phosphate. This is Glucose-6-phosphate isomerase from Polaromonas naphthalenivorans (strain CJ2).